A 578-amino-acid chain; its full sequence is Thrombomodulin (578 aa).

The N-terminal stretch at 1–16 (MLRVLLLGVLAPAGLG) is a signal peptide. At 17 to 518 (LPTPAQPQPR…SPSPVGPVHS (502 aa)) the chain is on the extracellular side. Positions 31–167 (MEHDCFQLFR…CAAEADGFLC (137 aa)) constitute a C-type lectin domain. A glycan (N-linked (GlcNAc...) asparagine) is linked at asparagine 114. 19 cysteine pairs are disulfide-bonded: cysteine 137/cysteine 158, cysteine 246/cysteine 257, cysteine 253/cysteine 266, cysteine 268/cysteine 281, cysteine 289/cysteine 297, cysteine 293/cysteine 309, cysteine 311/cysteine 324, cysteine 330/cysteine 341, cysteine 337/cysteine 350, cysteine 352/cysteine 363, cysteine 370/cysteine 379, cysteine 375/cysteine 389, cysteine 391/cysteine 405, cysteine 409/cysteine 414, cysteine 418/cysteine 426, cysteine 428/cysteine 440, cysteine 446/cysteine 455, cysteine 451/cysteine 464, and cysteine 466/cysteine 480. EGF-like domains are found at residues 242-282 (GAWD…RSCA) and 285-325 (AEHS…HRCE). Residue asparagine 300 is glycosylated (N-linked (GlcNAc...) asparagine). Positions 326–364 (DVDDCIQVPSLCPQLCVNTRGAFECHCYPGYELVDNECV) constitute an EGF-like 3; calcium-binding domain. Position 343 is a (3R)-3-hydroxyasparagine (asparagine 343). 2 consecutive EGF-like domains span residues 366-406 (PVDP…HRCQ) and 405-441 (CQMF…FMCT). The N-linked (GlcNAc...) asparagine glycan is linked to asparagine 410. Positions 442 to 481 (DIDECENGECPEACRNLPGTYECICGPDSPLAGQVATDCG) constitute an EGF-like 6; calcium-binding domain. The tract at residues 483–512 (IISDPDGDSDSGSGEPPVTPTPGVTPSPSP) is disordered. Residues serine 493 and serine 495 are each glycosylated (O-linked (Xyl...) (chondroitin sulfate) serine). Residues 499–512 (PVTPTPGVTPSPSP) show a composition bias toward pro residues. A helical membrane pass occupies residues 519 to 539 (GVLIGISIASLSLVVALLALL). The Cytoplasmic portion of the chain corresponds to 540–578 (CHLRKKQGAPRAELEYKCGAPAKEVVLQHVRTEQMPQKL).

In terms of assembly, interacts with ITGAL, ITGAM and ITGB2. Interacts with thrombin/F2; this interaction switches the specificity of thrombin from a procoagulant to an anticoagulant and antifibrinolytic protease. Interacts with ANGP1 and ANGP2; these interactions significantly inhibit the generation of activated PC and TAFIa/CPB2 by the thrombin/thrombomodulin complex. Interacts with PF4; this interaction enhances generation of activated protein C. Interacts with HMGB1; this interaction inhibits HMGB1 inflammatory activity. In terms of processing, N-glycosylated. The iron and 2-oxoglutarate dependent 3-hydroxylation of aspartate and asparagine is (R) stereospecific within EGF domains. In terms of tissue distribution, expressed in lung, liver, spleen, kidney, pancreas and lymph node. Low expression in heart, cerebrum, urinary bladder and uterus.

It localises to the membrane. In terms of biological role, endothelial cell receptor that plays a critical role in regulating several physiological processes including hemostasis, coagulation, fibrinolysis, inflammation, and angiogenesis. Acts as a cofactor for thrombin activation of protein C/PROC on the surface of vascular endothelial cells leading to initiation of the activated protein C anticoagulant pathway. Also accelerates the activation of the plasma carboxypeptidase B2/CPB2, which catalyzes removal of C-terminal basic amino acids from its substrates including kinins or anaphylatoxins leading to fibrinolysis inhibition. Plays critical protective roles in changing the cleavage specificity of protease-activated receptor 1/PAR1, inhibiting endothelial cell permeability and inflammation. Suppresses inflammation distinctly from its anticoagulant cofactor activity by sequestering HMGB1 thereby preventing it from engaging cellular receptors such as RAGE and contributing to the inflammatory response. The sequence is that of Thrombomodulin (THBD) from Canis lupus familiaris (Dog).